The sequence spans 435 residues: UPF0053 protein Rv2366c (435 aa).

Residues 1 to 185 (MTGYYQLLGS…QQRGVVAADE (185 aa)) enclose the CNNM transmembrane domain. 2 consecutive transmembrane segments (helical) span residues 7-27 (LLGS…DAAI) and 89-109 (VWGL…VVGV). CBS domains follow at residues 204–267 (MVPR…GRET) and 272–329 (VMRP…IADE).

This sequence belongs to the UPF0053 family.

The protein resides in the cell membrane. The chain is UPF0053 protein Rv2366c from Mycobacterium tuberculosis (strain ATCC 25618 / H37Rv).